A 161-amino-acid chain; its full sequence is ATP synthase subunit b 1 (161 aa).

The chain crosses the membrane as a helical span at residues 3 to 23 (FDASFFALVGLVLFFVLIAYL).

This sequence belongs to the ATPase B chain family. F-type ATPases have 2 components, F(1) - the catalytic core - and F(0) - the membrane proton channel. F(1) has five subunits: alpha(3), beta(3), gamma(1), delta(1), epsilon(1). F(0) has three main subunits: a(1), b(2) and c(10-14). The alpha and beta chains form an alternating ring which encloses part of the gamma chain. F(1) is attached to F(0) by a central stalk formed by the gamma and epsilon chains, while a peripheral stalk is formed by the delta and b chains.

Its subcellular location is the cell inner membrane. F(1)F(0) ATP synthase produces ATP from ADP in the presence of a proton or sodium gradient. F-type ATPases consist of two structural domains, F(1) containing the extramembraneous catalytic core and F(0) containing the membrane proton channel, linked together by a central stalk and a peripheral stalk. During catalysis, ATP synthesis in the catalytic domain of F(1) is coupled via a rotary mechanism of the central stalk subunits to proton translocation. In terms of biological role, component of the F(0) channel, it forms part of the peripheral stalk, linking F(1) to F(0). In Agrobacterium fabrum (strain C58 / ATCC 33970) (Agrobacterium tumefaciens (strain C58)), this protein is ATP synthase subunit b 1.